The following is a 249-amino-acid chain: Ribonuclease HII (249 aa).

Residues 30–221 form the RNase H type-2 domain; the sequence is GPVAGVDEVG…VRRLVMDGEP (192 aa). 3 residues coordinate a divalent metal cation: D36, E37, and D130.

Belongs to the RNase HII family. It depends on Mn(2+) as a cofactor. Requires Mg(2+) as cofactor.

It localises to the cytoplasm. The enzyme catalyses Endonucleolytic cleavage to 5'-phosphomonoester.. Functionally, endonuclease that specifically degrades the RNA of RNA-DNA hybrids. This chain is Ribonuclease HII, found in Mycolicibacterium vanbaalenii (strain DSM 7251 / JCM 13017 / BCRC 16820 / KCTC 9966 / NRRL B-24157 / PYR-1) (Mycobacterium vanbaalenii).